The chain runs to 341 residues: Ketol-acid reductoisomerase (NADP(+)) (341 aa).

One can recognise a KARI N-terminal Rossmann domain in the interval 1–182; that stretch reads MTELFYDDDA…GGTRAGVIKT (182 aa). NADP(+)-binding positions include 25 to 28, S51, S53, and 83 to 86; these read YGSQ and DQVQ. The active site involves H108. Position 134 (G134) interacts with NADP(+). The KARI C-terminal knotted domain occupies 183-328; that stretch reads TFTEETETDL…RELRKLFSWI (146 aa). Mg(2+) contacts are provided by D191, E195, E227, and E231. S252 contributes to the substrate binding site.

This sequence belongs to the ketol-acid reductoisomerase family. Mg(2+) is required as a cofactor.

The enzyme catalyses (2R)-2,3-dihydroxy-3-methylbutanoate + NADP(+) = (2S)-2-acetolactate + NADPH + H(+). It catalyses the reaction (2R,3R)-2,3-dihydroxy-3-methylpentanoate + NADP(+) = (S)-2-ethyl-2-hydroxy-3-oxobutanoate + NADPH + H(+). It participates in amino-acid biosynthesis; L-isoleucine biosynthesis; L-isoleucine from 2-oxobutanoate: step 2/4. The protein operates within amino-acid biosynthesis; L-valine biosynthesis; L-valine from pyruvate: step 2/4. Functionally, involved in the biosynthesis of branched-chain amino acids (BCAA). Catalyzes an alkyl-migration followed by a ketol-acid reduction of (S)-2-acetolactate (S2AL) to yield (R)-2,3-dihydroxy-isovalerate. In the isomerase reaction, S2AL is rearranged via a Mg-dependent methyl migration to produce 3-hydroxy-3-methyl-2-ketobutyrate (HMKB). In the reductase reaction, this 2-ketoacid undergoes a metal-dependent reduction by NADPH to yield (R)-2,3-dihydroxy-isovalerate. This is Ketol-acid reductoisomerase (NADP(+)) from Renibacterium salmoninarum (strain ATCC 33209 / DSM 20767 / JCM 11484 / NBRC 15589 / NCIMB 2235).